A 502-amino-acid chain; its full sequence is ATP synthase subunit alpha (502 aa).

Positions 115 to 135 (VDGLGPINTTNTRPIESPAPG) are disordered. 169-176 (GDRQTGKT) contacts ATP.

The protein belongs to the ATPase alpha/beta chains family. As to quaternary structure, F-type ATPases have 2 components, CF(1) - the catalytic core - and CF(0) - the membrane proton channel. CF(1) has five subunits: alpha(3), beta(3), gamma(1), delta(1), epsilon(1). CF(0) has three main subunits: a(1), b(2) and c(9-12). The alpha and beta chains form an alternating ring which encloses part of the gamma chain. CF(1) is attached to CF(0) by a central stalk formed by the gamma and epsilon chains, while a peripheral stalk is formed by the delta and b chains.

It is found in the cell membrane. It catalyses the reaction ATP + H2O + 4 H(+)(in) = ADP + phosphate + 5 H(+)(out). Functionally, produces ATP from ADP in the presence of a proton gradient across the membrane. The alpha chain is a regulatory subunit. In Bacillus mycoides (strain KBAB4) (Bacillus weihenstephanensis), this protein is ATP synthase subunit alpha.